Here is a 225-residue protein sequence, read N- to C-terminus: UPF0758 protein AZOSEA04420 (225 aa).

The MPN domain maps to 102-225 (VFESPLAVRN…PLSFAERGLL (124 aa)). Positions 173, 175, and 186 each coordinate Zn(2+). A JAMM motif motif is present at residues 173-186 (HNHPSGAAEPSPAD).

The protein belongs to the UPF0758 family.

This chain is UPF0758 protein AZOSEA04420, found in Aromatoleum aromaticum (strain DSM 19018 / LMG 30748 / EbN1) (Azoarcus sp. (strain EbN1)).